The sequence spans 260 residues: Scytalidopepsin B (260 aa).

Positions 1 to 20 (MKFTTAAVLSALVSAEIAFA) are cleaved as a signal peptide. Positions 21–54 (APGGNGFARRQARRQARAAGLKASPFRQVNAKEA) are excised as a propeptide. A disulfide bridge links Cys-101 with Cys-181. The active-site Proton acceptor is Glu-190. Cystine bridges form between Cys-195–Cys-219 and Cys-248–Cys-257.

It belongs to the peptidase G1 family. In terms of assembly, monomer.

It carries out the reaction Hydrolysis of proteins with broad specificity, cleaving 24-Phe-|-Phe-25, but not 15-Leu-|-Tyr-16 and 25-Phe-|-Tyr-26 in the B chain of insulin.. The chain is Scytalidopepsin B from Scytalidium lignicola (Hyphomycete).